The primary structure comprises 265 residues: Protein Exd1 homolog (265 aa).

Residues 32–82 form the 3'-5' exonuclease domain; it reads EKQLDRIVLIYQVDTTYHSALKDIKDQKIISLLVEPSFYGRHHPTSILVVA.

The protein belongs to the EXD1 family. In terms of assembly, homodimer.

Functionally, RNA-binding protein. Inactive exonuclease. This Drosophila melanogaster (Fruit fly) protein is Protein Exd1 homolog.